Here is a 404-residue protein sequence, read N- to C-terminus: Zinc metalloprotease Rip1 (404 aa).

Residues 1–21 (MMFVTGIVLFALAILISVALH) traverse the membrane as a helical segment. H21 lines the Zn(2+) pocket. The active site involves E22. H25 is a binding site for Zn(2+). Residues 104–124 (PGMNLAICLVLIYAIALVWGL) traverse the membrane as a helical segment. Residues 121–203 (VWGLPNLHPP…SVPIVVERDG (83 aa)) enclose the PDZ domain. D202 lines the Zn(2+) pocket. A run of 2 helical transmembrane segments spans residues 313–333 (LWVA…AINL) and 373–393 (LLPA…LTVT).

It belongs to the peptidase M50B family. It depends on Zn(2+) as a cofactor.

It localises to the cell membrane. Its function is as follows. A probable site-2 protease (S2P) that cleaves type-2 transmembrane proteins within their membrane-spanning domains. Degrades anti-sigma factors RskA, RslA and RsmA, releasing sigma factors SigK, SigL and SigM from the cellular membrane, activating signaling pathways. Does not act on RsdA. Regulates the composition of extractable mycolic acids in the cell envelope in response to changes in membrane fluidity. Mediates transcriptional regulation of mycolic acid biosynthetic genes in response to detergent. Probably also cleaves PbpB (PBP3, FtsI); this cleavage is inhibited by Wag31-PbpBI interaction. In terms of biological role, regulated intramembrane proteolysis (RIP) occurs when an extracytoplasmic signal (possibly oxidative stress) triggers a concerted proteolytic cascade to transmit information and elicit cellular responses. The membrane-spanning regulatory substrate protein (includes anti-sigma factors RskA, RslA, RsmA, and PbpB) is first cut extracytoplasmically (site-1 protease, S1P), then within the membrane itself (site-2 protease, S2P, this entry), while cytoplasmic proteases finish degrading the regulatory protein, liberating the effector protein (ECF sigma factors SigK, SigL and SigM). The sequence is that of Zinc metalloprotease Rip1 (rip1) from Mycobacterium tuberculosis (strain ATCC 35801 / TMC 107 / Erdman).